A 188-amino-acid chain; its full sequence is Probable nicotinate-nucleotide adenylyltransferase (188 aa).

Belongs to the NadD family.

It catalyses the reaction nicotinate beta-D-ribonucleotide + ATP + H(+) = deamido-NAD(+) + diphosphate. The protein operates within cofactor biosynthesis; NAD(+) biosynthesis; deamido-NAD(+) from nicotinate D-ribonucleotide: step 1/1. Its function is as follows. Catalyzes the reversible adenylation of nicotinate mononucleotide (NaMN) to nicotinic acid adenine dinucleotide (NaAD). In Listeria monocytogenes serovar 1/2a (strain ATCC BAA-679 / EGD-e), this protein is Probable nicotinate-nucleotide adenylyltransferase.